Consider the following 33-residue polypeptide: Ferredoxin (33 aa).

The region spanning 3 to 33 (KYKVRLLSEAEGIDVTIDSADDVYILDAAEE) is the 2Fe-2S ferredoxin-type domain.

This sequence belongs to the 2Fe2S plant-type ferredoxin family. The cofactor is [2Fe-2S] cluster.

It is found in the plastid. The protein resides in the chloroplast. Functionally, ferredoxins are iron-sulfur proteins that transfer electrons in a wide variety of metabolic reactions. This chain is Ferredoxin, found in Porphyridium aerugineum (Red microalga).